We begin with the raw amino-acid sequence, 276 residues long: MNQVWNIARKELSDGLRNRWLLAISLLFAVLAVGIAWLGAAASGQLGFTSIPATIASLASLATFLMPLIALLLAYDAIVGEDEGGTLMLLLTYPLGRGQILLGKFVGHGLILALAVLIGFGCAALAIALLVEGVELGMLFWAFGRFMISSTLLGWVFLAFAYVLSGKVNEKSSAAGLALGVWFLFVLVFDLVLLALLVLSEGKFNPELLPWLLLLNPTDIYRLINLSGFEGSGSAMGVLSLGADLPVPAAVLWLCLLAWIGVSLLLAYAIFRRRLT.

The next 6 helical transmembrane spans lie at 20–40, 55–75, 111–131, 146–166, 179–199, and 251–271; these read WLLA…WLGA, IASL…LLAY, ILAL…ALLV, FMIS…VLSG, LGVW…LLVL, and VLWL…YAIF.

The complex may be composed of an ATP-binding protein (NosF), a transmembrane protein (NosY) and a solute-binding protein (NosD).

It is found in the cell inner membrane. Its function is as follows. Required for the assembly of the copper chromophores of nitrous oxide reductase. Could be part of the ABC transporter complex NosDFY. The protein is Probable ABC transporter permease protein NosY of Stutzerimonas stutzeri (Pseudomonas stutzeri).